The primary structure comprises 513 residues: Calcium-binding mitochondrial carrier protein SCaMC-2 (513 aa).

Residues 1-233 lie on the Mitochondrial intermembrane side of the membrane; the sequence is MARPRSLVSP…EKQTGMWWRH (233 aa). 4 consecutive EF-hand domains span residues 55–90, 91–124, 122–157, and 158–193; these read EHET…LGVH, RTEL…RDHE, DHEK…LGVN, and ISEQ…HPAE. The Ca(2+) site is built by D68, N70, D72, D79, D104, D106, D108, Q110, and E115. 3 Solcar repeats span residues 228 to 314, 322 to 407, and 419 to 507; these read GMWW…MKRI, LGIH…LKNA, and PGVF…LKLT. Residues 234–251 traverse the membrane as a helical segment; sequence LVAGGGAGAVSRTCTAPL. At 252-288 the chain is on the mitochondrial matrix side; it reads DRLKVLMQVHASRSNNMSMLGGFTQMIREGGIRSLWR. A helical membrane pass occupies residues 289–308; that stretch reads GNGINVIKIAPESAIKFMAY. At 309–331 the chain is on the mitochondrial intermembrane side; sequence EQMKRIIGSDQETLGIHERLVAG. A helical membrane pass occupies residues 332 to 345; the sequence is SLAGVIAQSSIYPM. Topologically, residues 346–381 are mitochondrial matrix; the sequence is EVLKTRMALRKTGQYQGMLDCGKKILLKEGVSAFYK. A helical transmembrane segment spans residues 382-401; the sequence is GYVPNMLGIIPYAGIDLAVY. The Mitochondrial intermembrane portion of the chain corresponds to 402-424; sequence ETLKNAWLQRYATSSADPGVFVL. The chain crosses the membrane as a helical span at residues 425-442; that stretch reads LACGTISSTCGQLASYPL. Residues 443-481 lie on the Mitochondrial matrix side of the membrane; that stretch reads ALVRTRMQAEASVEGAPQMTMSKLFKHIVKTEGAFGLYR. The helical transmembrane segment at 482 to 501 threads the bilayer; sequence GLAPNFMKVIPAVSISYVVY. Over 502–513 the chain is Mitochondrial intermembrane; sequence ENLKLTLGVQSR.

Belongs to the mitochondrial carrier (TC 2.A.29) family.

The protein resides in the mitochondrion inner membrane. Calcium-dependent mitochondrial solute carrier. The sequence is that of Calcium-binding mitochondrial carrier protein SCaMC-2 (slc25a25) from Xenopus tropicalis (Western clawed frog).